A 109-amino-acid chain; its full sequence is Putative pterin-4-alpha-carbinolamine dehydratase (109 aa).

The protein belongs to the pterin-4-alpha-carbinolamine dehydratase family.

It carries out the reaction (4aS,6R)-4a-hydroxy-L-erythro-5,6,7,8-tetrahydrobiopterin = (6R)-L-erythro-6,7-dihydrobiopterin + H2O. This chain is Putative pterin-4-alpha-carbinolamine dehydratase, found in Vibrio cholerae serotype O1 (strain ATCC 39315 / El Tor Inaba N16961).